The following is a 140-amino-acid chain: Large-conductance mechanosensitive channel 3 (140 aa).

The next 3 membrane-spanning stretches (helical) occupy residues 8 to 28, 30 to 50, and 81 to 101; these read FISKGNVMDLAVGVIIGAAFG, IVTSLVDDVIMPIFGAIFGGL, and GSFITAVLNFLILAFIIFLMV.

The protein belongs to the MscL family. In terms of assembly, homopentamer.

The protein localises to the cell inner membrane. In terms of biological role, channel that opens in response to stretch forces in the membrane lipid bilayer. May participate in the regulation of osmotic pressure changes within the cell. The protein is Large-conductance mechanosensitive channel 3 of Mesorhizobium japonicum (strain LMG 29417 / CECT 9101 / MAFF 303099) (Mesorhizobium loti (strain MAFF 303099)).